The chain runs to 341 residues: N-acetyl-gamma-glutamyl-phosphate reductase (341 aa).

The active site involves Cys147.

The protein belongs to the NAGSA dehydrogenase family. Type 1 subfamily.

The protein resides in the cytoplasm. It carries out the reaction N-acetyl-L-glutamate 5-semialdehyde + phosphate + NADP(+) = N-acetyl-L-glutamyl 5-phosphate + NADPH + H(+). It functions in the pathway amino-acid biosynthesis; L-arginine biosynthesis; N(2)-acetyl-L-ornithine from L-glutamate: step 3/4. Catalyzes the NADPH-dependent reduction of N-acetyl-5-glutamyl phosphate to yield N-acetyl-L-glutamate 5-semialdehyde. The polypeptide is N-acetyl-gamma-glutamyl-phosphate reductase (Dehalococcoides mccartyi (strain ATCC BAA-2100 / JCM 16839 / KCTC 5957 / BAV1)).